We begin with the raw amino-acid sequence, 151 residues long: Probable cGMP 3',5'-cyclic phosphodiesterase subunit delta (151 aa).

This sequence belongs to the PDE6D/unc-119 family. In terms of assembly, interacts with Pde6.

The protein resides in the nucleus. The protein localises to the cytoplasm. In Drosophila persimilis (Fruit fly), this protein is Probable cGMP 3',5'-cyclic phosphodiesterase subunit delta.